The chain runs to 383 residues: Na(+)/H(+) antiporter NhaA (383 aa).

11 consecutive transmembrane segments (helical) span residues 14–34, 47–67, 87–107, 117–137, 146–166, 171–191, 205–225, 252–272, 280–300, 321–341, and 356–376; these read AGGI…NSPL, FGMS…FLLI, IFPA…YVAF, GWAI…ALLG, VFLL…IALF, LSTM…MLNA, AILW…GVVI, VAFG…LEGV, MLPL…IFTF, IFAV…ISSL, and LGIL…LHFS.

Belongs to the NhaA Na(+)/H(+) (TC 2.A.33) antiporter family.

It is found in the cell inner membrane. It catalyses the reaction Na(+)(in) + 2 H(+)(out) = Na(+)(out) + 2 H(+)(in). Na(+)/H(+) antiporter that extrudes sodium in exchange for external protons. This is Na(+)/H(+) antiporter NhaA from Vibrio alginolyticus.